The primary structure comprises 792 residues: Receptor-like protein 54 (792 aa).

Residues 1–21 (MKSNLAVFFITCFFCCVFVTS) form the signal peptide. Over 22 to 758 (DSVYTLPFPF…PKQEHALNWK (737 aa)) the chain is Extracellular. 2 N-linked (GlcNAc...) asparagine glycosylation sites follow: Asn68 and Asn107. LRR repeat units lie at residues 114-137 (QHLR…GFGR), 139-162 (TYLE…ISNL), 163-187 (SRLT…SLTL), 189-209 (ENID…LFTM), 211-233 (FLVS…NYSA), 235-258 (SKLL…ISKL), 259-282 (ANLI…FLLF), 283-302 (KSLV…GTGS), 303-324 (ENLT…FIKD), 325-349 (LQRL…LWTL), 351-374 (SMLH…IILN), and 375-399 (SSIS…PYVN). N-linked (GlcNAc...) asparagine glycosylation occurs at Asn161. Residue Asn230 is glycosylated (N-linked (GlcNAc...) asparagine). N-linked (GlcNAc...) asparagine glycans are attached at residues Asn304 and Asn314. Asn356 and Asn374 each carry an N-linked (GlcNAc...) asparagine glycan. The stretch at 400-418 (IMAASNNYFTGGIPLIFCK) is one LRR 13; degenerate repeat. LRR repeat units follow at residues 419–443 (RYRL…LTNV), 444–470 (SLGL…RLVL), 472–489 (DVGH…LVNC), and 490–515 (TTLK…ALTR). N-linked (GlcNAc...) asparagine glycans are attached at residues Asn431, Asn442, Asn454, Asn488, and Asn503. An LRR 18; degenerate repeat occupies 516 to 536 (LEIIVLRSNRFHGPISSPEVS). LRR repeat units lie at residues 539–563 (FTAL…YFAN), 614–637 (DTYT…IGDL), 638–661 (KSLI…LAKL), 662–685 (KQLE…LREL), and 687–709 (FLGY…TQVG). Asn553 and Asn563 each carry an N-linked (GlcNAc...) asparagine glycan. N-linked (GlcNAc...) asparagine glycosylation is present at Asn647. Asn692 carries an N-linked (GlcNAc...) asparagine glycan. A helical membrane pass occupies residues 759–779 (AAAIGYGPGVLFGLAIGQAFA). Topologically, residues 780–792 (RYKPVLFYKLFRL) are cytoplasmic.

The protein belongs to the RLP family.

It is found in the cell membrane. The polypeptide is Receptor-like protein 54 (Arabidopsis thaliana (Mouse-ear cress)).